The primary structure comprises 250 residues: Hydroxyethylthiazole kinase (250 aa).

M39 provides a ligand contact to substrate. Residues R114 and T159 each coordinate ATP. Residue G186 coordinates substrate.

Belongs to the Thz kinase family. Mg(2+) serves as cofactor.

The catalysed reaction is 5-(2-hydroxyethyl)-4-methylthiazole + ATP = 4-methyl-5-(2-phosphooxyethyl)-thiazole + ADP + H(+). It participates in cofactor biosynthesis; thiamine diphosphate biosynthesis; 4-methyl-5-(2-phosphoethyl)-thiazole from 5-(2-hydroxyethyl)-4-methylthiazole: step 1/1. Catalyzes the phosphorylation of the hydroxyl group of 4-methyl-5-beta-hydroxyethylthiazole (THZ). The sequence is that of Hydroxyethylthiazole kinase from Lactococcus lactis subsp. cremoris (strain SK11).